A 190-amino-acid chain; its full sequence is Elongation factor P-like protein (190 aa).

It belongs to the elongation factor P family.

This Cronobacter sakazakii (strain ATCC BAA-894) (Enterobacter sakazakii) protein is Elongation factor P-like protein.